A 237-amino-acid chain; its full sequence is LexA repressor (237 aa).

Residues 26–46 constitute a DNA-binding region (H-T-H motif); it reads FDEMKEALDLRSKSGIHRLIT. Residues Ser-158 and Lys-196 each act as for autocatalytic cleavage activity in the active site.

Belongs to the peptidase S24 family. Homodimer.

The catalysed reaction is Hydrolysis of Ala-|-Gly bond in repressor LexA.. Its function is as follows. Represses a number of genes involved in the response to DNA damage (SOS response), including recA and lexA. In the presence of single-stranded DNA, RecA interacts with LexA causing an autocatalytic cleavage which disrupts the DNA-binding part of LexA, leading to derepression of the SOS regulon and eventually DNA repair. In Xanthobacter autotrophicus (strain ATCC BAA-1158 / Py2), this protein is LexA repressor.